Here is a 595-residue protein sequence, read N- to C-terminus: Probable translation initiation factor IF-2 (595 aa).

In terms of domain architecture, tr-type G spans 11-225 (LRTPIVAVLG…ILVGLAQRYL (215 aa)). A G1 region spans residues 20-27 (GHVDHGKT). GTP is bound at residue 20-27 (GHVDHGKT). The interval 45 to 49 (GITQH) is G2. The segment at 81–84 (DTPG) is G3. GTP contacts are provided by residues 81-85 (DTPGH) and 135-138 (NKID). The tract at residues 135–138 (NKID) is G4. The interval 203-205 (SAL) is G5.

It belongs to the TRAFAC class translation factor GTPase superfamily. Classic translation factor GTPase family. IF-2 subfamily.

Function in general translation initiation by promoting the binding of the formylmethionine-tRNA to ribosomes. Seems to function along with eIF-2. The protein is Probable translation initiation factor IF-2 (infB) of Archaeoglobus fulgidus (strain ATCC 49558 / DSM 4304 / JCM 9628 / NBRC 100126 / VC-16).